The following is a 164-amino-acid chain: UPF0114 protein YqhA (164 aa).

A run of 3 helical transmembrane segments spans residues 15–35 (LLAP…LKFF), 53–73 (LILV…LVMV), and 136–156 (LMWY…MGYL).

Belongs to the UPF0114 family.

The protein resides in the cell membrane. The sequence is that of UPF0114 protein YqhA from Salmonella dublin (strain CT_02021853).